Reading from the N-terminus, the 361-residue chain is Chorismate synthase (361 aa).

NADP(+) is bound at residue arginine 48. FMN-binding positions include 125–127 (RSS), 238–239 (NA), glycine 278, 293–297 (KPTSS), and arginine 319.

It belongs to the chorismate synthase family. In terms of assembly, homotetramer. It depends on FMNH2 as a cofactor.

The catalysed reaction is 5-O-(1-carboxyvinyl)-3-phosphoshikimate = chorismate + phosphate. It functions in the pathway metabolic intermediate biosynthesis; chorismate biosynthesis; chorismate from D-erythrose 4-phosphate and phosphoenolpyruvate: step 7/7. Catalyzes the anti-1,4-elimination of the C-3 phosphate and the C-6 proR hydrogen from 5-enolpyruvylshikimate-3-phosphate (EPSP) to yield chorismate, which is the branch point compound that serves as the starting substrate for the three terminal pathways of aromatic amino acid biosynthesis. This reaction introduces a second double bond into the aromatic ring system. This Aliivibrio fischeri (strain ATCC 700601 / ES114) (Vibrio fischeri) protein is Chorismate synthase.